A 993-amino-acid polypeptide reads, in one-letter code: Vacuolar membrane protease (993 aa).

Over M1–T24 the chain is Cytoplasmic. A helical membrane pass occupies residues L25–V45. Over P46–T391 the chain is Vacuolar. 3 N-linked (GlcNAc...) asparagine glycosylation sites follow: N59, N116, and N119. Residues H175 and D187 each coordinate Zn(2+). E221 acts as the Proton acceptor in catalysis. A Zn(2+)-binding site is contributed by E222. N-linked (GlcNAc...) asparagine glycosylation is present at N238. The Zn(2+) site is built by E247 and H320. The chain crosses the membrane as a helical span at residues L392–I412. Over A413–T447 the chain is Cytoplasmic. A helical membrane pass occupies residues P448 to I468. At N469–S475 the chain is on the vacuolar side. Residues S476 to A496 traverse the membrane as a helical segment. The Cytoplasmic portion of the chain corresponds to R497–R509. Residues A510 to Y530 traverse the membrane as a helical segment. Residues A531 to K534 lie on the Vacuolar side of the membrane. A helical transmembrane segment spans residues G535–V555. The Cytoplasmic portion of the chain corresponds to S556 to W672. The interval R579–S621 is disordered. A helical transmembrane segment spans residues I673 to L693. The Vacuolar segment spans residues L694–F709. A helical membrane pass occupies residues I710–I730. At H731–V737 the chain is on the cytoplasmic side. Residues P738 to F758 form a helical membrane-spanning segment. The Vacuolar segment spans residues S759–Q993. N-linked (GlcNAc...) asparagine glycans are attached at residues N806, N847, and N955.

This sequence belongs to the peptidase M28 family. Requires Zn(2+) as cofactor.

It is found in the vacuole membrane. Functionally, may be involved in vacuolar sorting and osmoregulation. This Paracoccidioides lutzii (strain ATCC MYA-826 / Pb01) (Paracoccidioides brasiliensis) protein is Vacuolar membrane protease.